The chain runs to 319 residues: MVHNKVTIIGSGPAAHTAAIYLARAEIKPILYEGMMANGIAAGGQLTTTTEIENFPGFPDGLTGSELMDRMREQSTKFGTEIITETVSKVDLSSKPFKLWTEFNEDAEPVTTDAIILATGASAKRMHLPGEETYWQKGISACAVCDGAVPIFRNKPLAVIGGGDSACEEAQFLTKYGSKVFMLVRKDHLRASTIMQKRAEKNEKIEILYNTVALEAKGDGKLLNALRIKNTKKNEETDLPVSGLFYAIGHTPATKIVAGQVDTDEAGYIKTVPGSSLTSVPGFFAAGDVQDSKYRQAITSAGSGCMAALDAEKYLTSLE.

Residues 11-14 (SGPA), 40-41 (IA), glutamine 45, asparagine 54, valine 87, cysteine 145, aspartate 288, and 295-297 (RQA) contribute to the FAD site. Cysteine 142 and cysteine 145 are joined by a disulfide. Position 303 is a phosphoserine (serine 303).

Belongs to the class-II pyridine nucleotide-disulfide oxidoreductase family. In terms of assembly, homodimer. Requires FAD as cofactor.

The protein resides in the cytoplasm. The protein localises to the mitochondrion intermembrane space. It carries out the reaction [thioredoxin]-dithiol + NADP(+) = [thioredoxin]-disulfide + NADPH + H(+). Central component in the thioredoxin system. Reduces thioredoxins 1 and 2. The chain is Thioredoxin reductase 1 (TRR1) from Saccharomyces cerevisiae (strain ATCC 204508 / S288c) (Baker's yeast).